Consider the following 155-residue polypeptide: Fibroblast growth factor 2 (155 aa).

Residues 1–9 (MAAGSITTL) constitute a propeptide that is removed on maturation. Positions 1–11 (MAAGSITTLPT) are enriched in polar residues. The tract at residues 1-24 (MAAGSITTLPTESEDGGNTPFSPG) is disordered. Heparin contacts are provided by residues 27-31 (KDPKR) and 116-119 (RSRK).

The protein belongs to the heparin-binding growth factors family.

The protein resides in the secreted. The protein localises to the nucleus. Acts as a ligand for FGFR1, FGFR2, FGFR3 and FGFR4. Also acts as an integrin ligand which is required for FGF2 signaling. Plays an important role in the regulation of cell survival, cell division, cell differentiation and cell migration. Functions as a potent mitogen in vitro. Can induce angiogenesis. The protein is Fibroblast growth factor 2 (fgf2) of Xenopus laevis (African clawed frog).